A 213-amino-acid polypeptide reads, in one-letter code: ATP synthase peripheral stalk subunit OSCP, mitochondrial (213 aa).

The N-terminal 23 residues, M1–P23, are a transit peptide targeting the mitochondrion. The SIFI-degron signature appears at A5–P23. N6-acetyllysine occurs at positions 54, 60, 70, and 73. Position 90 is an N6-succinyllysine (K90). An N6-acetyllysine; alternate mark is found at K100 and K158. 2 positions are modified to N6-succinyllysine; alternate: K100 and K158. K172, K176, and K192 each carry N6-acetyllysine. Position 199 is an N6-succinyllysine (K199).

The protein belongs to the ATPase delta chain family. Component of the ATP synthase complex composed at least of ATP5F1A/subunit alpha, ATP5F1B/subunit beta, ATP5MC1/subunit c (homooctomer), MT-ATP6/subunit a, MT-ATP8/subunit 8, ATP5ME/subunit e, ATP5MF/subunit f, ATP5MG/subunit g, ATP5MK/subunit k, ATP5MJ/subunit j, ATP5F1C/subunit gamma, ATP5F1D/subunit delta, ATP5F1E/subunit epsilon, ATP5PF/subunit F6, ATP5PB/subunit b, ATP5PD/subunit d, ATP5PO/subunit OSCP. ATP synthase complex consists of a soluble F(1) head domain (subunits alpha(3) and beta(3)) - the catalytic core - and a membrane F(0) domain - the membrane proton channel (subunits c, a, 8, e, f, g, k and j). These two domains are linked by a central stalk (subunits gamma, delta, and epsilon) rotating inside the F1 region and a stationary peripheral stalk (subunits F6, b, d, and OSCP). Post-translationally, in response to mitochondrial stress, the precursor protein is ubiquitinated by the SIFI complex in the cytoplasm before mitochondrial import, leading to its degradation. Within the SIFI complex, UBR4 initiates ubiquitin chain that are further elongated or branched by KCMF1.

The protein localises to the mitochondrion. The protein resides in the mitochondrion inner membrane. Its function is as follows. Subunit OSCP, of the mitochondrial membrane ATP synthase complex (F(1)F(0) ATP synthase or Complex V) that produces ATP from ADP in the presence of a proton gradient across the membrane which is generated by electron transport complexes of the respiratory chain. ATP synthase complex consist of a soluble F(1) head domain - the catalytic core - and a membrane F(1) domain - the membrane proton channel. These two domains are linked by a central stalk rotating inside the F(1) region and a stationary peripheral stalk. During catalysis, ATP synthesis in the catalytic domain of F(1) is coupled via a rotary mechanism of the central stalk subunits to proton translocation. In vivo, can only synthesize ATP although its ATP hydrolase activity can be activated artificially in vitro. Part of the complex F(0) domain. Part of the complex F(0) domain and the peripheric stalk, which acts as a stator to hold the catalytic alpha(3)beta(3) subcomplex and subunit a/ATP6 static relative to the rotary elements. The protein is ATP synthase peripheral stalk subunit OSCP, mitochondrial of Rhinolophus ferrumequinum (Greater horseshoe bat).